Here is a 248-residue protein sequence, read N- to C-terminus: tRNA (guanine-N(1)-)-methyltransferase (248 aa).

Residues glycine 113 and 133–138 each bind S-adenosyl-L-methionine; that span reads IGDYVL.

This sequence belongs to the RNA methyltransferase TrmD family. As to quaternary structure, homodimer.

It is found in the cytoplasm. It carries out the reaction guanosine(37) in tRNA + S-adenosyl-L-methionine = N(1)-methylguanosine(37) in tRNA + S-adenosyl-L-homocysteine + H(+). Functionally, specifically methylates guanosine-37 in various tRNAs. This chain is tRNA (guanine-N(1)-)-methyltransferase, found in Shewanella loihica (strain ATCC BAA-1088 / PV-4).